Here is a 417-residue protein sequence, read N- to C-terminus: MAEIKNYTLNFGPQHPAAHGVLRLVLELDGEVIQRADPHIGLLHRATEKLAESKTYIQSLPYMDRLDYVSMMSNEQAYCLAIEKLLGVDVPIRAQYIRVMYAEITRLLNHLLWLGAHGFDCGAMNILIYCFREREALFDMYEAVSGARMHAAYFRPGGVYRDLPDTMPQYRVSKIKNAKAIAALNENRQGSLLDFIDDFVAKFPRLVDEYETLLTDNRIWKQRTVGVGVVSPERALNLGFTGPMLRGSGFAWDLRKQQPYDVYDRMDFDIPVGKTGDCYDRYLVRIEEMRQSNRIIKQCIDWLRVNPGPVITSNHKVAAPDRESMKTNMEELIHHFKLFTEGFHVPEGEAYAAVEHPKGEFGIYIVSDGANKPYRLKIRPPGFPHLAAMDEMSRGHMIADAVAVIGTMDIVFGEIDR.

Belongs to the complex I 49 kDa subunit family. As to quaternary structure, NDH-1 is composed of 14 different subunits. Subunits NuoB, C, D, E, F, and G constitute the peripheral sector of the complex.

Its subcellular location is the cell inner membrane. The catalysed reaction is a quinone + NADH + 5 H(+)(in) = a quinol + NAD(+) + 4 H(+)(out). Functionally, NDH-1 shuttles electrons from NADH, via FMN and iron-sulfur (Fe-S) centers, to quinones in the respiratory chain. The immediate electron acceptor for the enzyme in this species is believed to be ubiquinone. Couples the redox reaction to proton translocation (for every two electrons transferred, four hydrogen ions are translocated across the cytoplasmic membrane), and thus conserves the redox energy in a proton gradient. The polypeptide is NADH-quinone oxidoreductase subunit D (Polaromonas sp. (strain JS666 / ATCC BAA-500)).